Reading from the N-terminus, the 197-residue chain is Small ribosomal subunit protein uS4 (197 aa).

Residues 88-150 form the S4 RNA-binding domain; it reads SRLDNLVYRM…AKSLEIILDN (63 aa).

It belongs to the universal ribosomal protein uS4 family. As to quaternary structure, part of the 30S ribosomal subunit. Contacts protein S5. The interaction surface between S4 and S5 is involved in control of translational fidelity.

Its function is as follows. One of the primary rRNA binding proteins, it binds directly to 16S rRNA where it nucleates assembly of the body of the 30S subunit. With S5 and S12 plays an important role in translational accuracy. The polypeptide is Small ribosomal subunit protein uS4 (Azobacteroides pseudotrichonymphae genomovar. CFP2).